The sequence spans 56 residues: Small ribosomal subunit protein uS14 (56 aa).

Zn(2+) contacts are provided by Cys-21, Cys-24, Cys-39, and Cys-42.

Belongs to the universal ribosomal protein uS14 family. Zinc-binding uS14 subfamily. Part of the 30S ribosomal subunit. Zn(2+) serves as cofactor.

Its function is as follows. Binds 16S rRNA, required for the assembly of 30S particles. The polypeptide is Small ribosomal subunit protein uS14 (Methanospirillum hungatei JF-1 (strain ATCC 27890 / DSM 864 / NBRC 100397 / JF-1)).